The sequence spans 409 residues: Arginine deiminase (409 aa).

Residue C399 is the Amidino-cysteine intermediate of the active site.

Belongs to the arginine deiminase family.

It localises to the cytoplasm. It carries out the reaction L-arginine + H2O = L-citrulline + NH4(+). It functions in the pathway amino-acid degradation; L-arginine degradation via ADI pathway; carbamoyl phosphate from L-arginine: step 1/2. The polypeptide is Arginine deiminase (Borrelia recurrentis (strain A1)).